The following is a 100-amino-acid chain: Integration host factor subunit alpha (100 aa).

Belongs to the bacterial histone-like protein family. Heterodimer of an alpha and a beta chain.

In terms of biological role, this protein is one of the two subunits of integration host factor, a specific DNA-binding protein that functions in genetic recombination as well as in transcriptional and translational control. The polypeptide is Integration host factor subunit alpha (Buchnera aphidicola subsp. Schizaphis graminum (strain Sg)).